The sequence spans 108 residues: Large ribosomal subunit protein bL21 (108 aa).

It belongs to the bacterial ribosomal protein bL21 family. In terms of assembly, part of the 50S ribosomal subunit. Contacts protein L20.

This protein binds to 23S rRNA in the presence of protein L20. This chain is Large ribosomal subunit protein bL21, found in Acidobacterium capsulatum (strain ATCC 51196 / DSM 11244 / BCRC 80197 / JCM 7670 / NBRC 15755 / NCIMB 13165 / 161).